Consider the following 598-residue polypeptide: Aspartate--tRNA(Asp/Asn) ligase (598 aa).

An L-aspartate-binding site is contributed by Glu-170. The tract at residues 194 to 197 (QLFK) is aspartate. Arg-216 contributes to the L-aspartate binding site. ATP-binding positions include 216–218 (RDE) and Gln-225. His-448 lines the L-aspartate pocket. Residue Glu-482 participates in ATP binding. Position 489 (Arg-489) interacts with L-aspartate. 534–537 (GWDR) serves as a coordination point for ATP. The segment at 558-598 (GGGVDPLTDAPAPITPQQRKESGIDAKPREDKPKEDAKSKA) is disordered. The segment covering 575–598 (QRKESGIDAKPREDKPKEDAKSKA) has biased composition (basic and acidic residues).

Belongs to the class-II aminoacyl-tRNA synthetase family. Type 1 subfamily. Homodimer.

The protein localises to the cytoplasm. It catalyses the reaction tRNA(Asx) + L-aspartate + ATP = L-aspartyl-tRNA(Asx) + AMP + diphosphate. Its function is as follows. Aspartyl-tRNA synthetase with relaxed tRNA specificity since it is able to aspartylate not only its cognate tRNA(Asp) but also tRNA(Asn). Reaction proceeds in two steps: L-aspartate is first activated by ATP to form Asp-AMP and then transferred to the acceptor end of tRNA(Asp/Asn). The polypeptide is Aspartate--tRNA(Asp/Asn) ligase (Mycolicibacterium smegmatis (strain ATCC 700084 / mc(2)155) (Mycobacterium smegmatis)).